A 333-amino-acid chain; its full sequence is DNA repair and recombination protein RadA (333 aa).

Residue 127 to 134 (GEFGSGKT) coordinates ATP.

Belongs to the eukaryotic RecA-like protein family.

Involved in DNA repair and in homologous recombination. Binds and assemble on single-stranded DNA to form a nucleoprotein filament. Hydrolyzes ATP in a ssDNA-dependent manner and promotes DNA strand exchange between homologous DNA molecules. This is DNA repair and recombination protein RadA from Pyrobaculum aerophilum (strain ATCC 51768 / DSM 7523 / JCM 9630 / CIP 104966 / NBRC 100827 / IM2).